A 500-amino-acid chain; its full sequence is Abscisic acid 8'-hydroxylase 3 (500 aa).

Residues 3–23 (ASFVIVIVISFFISLAFMCYV) traverse the membrane as a helical segment. A heme-binding site is contributed by Cys426.

This sequence belongs to the cytochrome P450 family. Heme is required as a cofactor.

The protein localises to the membrane. The enzyme catalyses 2-cis-(+)-abscisate + reduced [NADPH--hemoprotein reductase] + O2 = (+)-8'-hydroxyabscisate + oxidized [NADPH--hemoprotein reductase] + H2O + H(+). The protein operates within plant hormone degradation; abscisic acid degradation. Involved in the oxidative degradation of abscisic acid. The polypeptide is Abscisic acid 8'-hydroxylase 3 (CYP707A7) (Oryza sativa subsp. indica (Rice)).